A 108-amino-acid polypeptide reads, in one-letter code: MDQFECINVADAHQKLQEKEAVLVDIRDPQSFAMGHAVQTFHLTNDTLGAFMRDNDFDTPVMVMCYHGNSSKGAAQYLLQQGYDVVYSIDGGFEAWQRQFPAEVAYGA.

The region spanning 17-105 (QEKEAVLVDI…WQRQFPAEVA (89 aa)) is the Rhodanese domain. The active-site Cysteine persulfide intermediate is the C65.

It belongs to the GlpE family.

It is found in the cytoplasm. The catalysed reaction is thiosulfate + hydrogen cyanide = thiocyanate + sulfite + 2 H(+). It carries out the reaction thiosulfate + [thioredoxin]-dithiol = [thioredoxin]-disulfide + hydrogen sulfide + sulfite + 2 H(+). Transferase that catalyzes the transfer of sulfur from thiosulfate to thiophilic acceptors such as cyanide or dithiols. May function in a CysM-independent thiosulfate assimilation pathway by catalyzing the conversion of thiosulfate to sulfite, which can then be used for L-cysteine biosynthesis. The sequence is that of Thiosulfate sulfurtransferase GlpE from Shigella dysenteriae serotype 1 (strain Sd197).